Reading from the N-terminus, the 1146-residue chain is ATP-dependent helicase/deoxyribonuclease subunit B (1146 aa).

One can recognise a UvrD-like helicase ATP-binding domain in the interval 1–280; it reads MSLRFIYGRA…LNSKPLFRFS (280 aa). Position 8 to 15 (8 to 15) interacts with ATP; sequence GRAGSGKT. The UvrD-like helicase C-terminal domain occupies 276–584; sequence LFRFSQSPEL…LVGSLERSRS (309 aa). [4Fe-4S] cluster is bound by residues cysteine 786, cysteine 1105, cysteine 1108, and cysteine 1114.

The protein belongs to the helicase family. AddB/RexB type 1 subfamily. In terms of assembly, heterodimer of AddA and AddB. Requires Mg(2+) as cofactor. It depends on [4Fe-4S] cluster as a cofactor.

Its function is as follows. The heterodimer acts as both an ATP-dependent DNA helicase and an ATP-dependent, dual-direction single-stranded exonuclease. Recognizes the chi site generating a DNA molecule suitable for the initiation of homologous recombination. The AddB subunit has 5' -&gt; 3' nuclease activity but not helicase activity. The polypeptide is ATP-dependent helicase/deoxyribonuclease subunit B (Acetivibrio thermocellus (strain ATCC 27405 / DSM 1237 / JCM 9322 / NBRC 103400 / NCIMB 10682 / NRRL B-4536 / VPI 7372) (Clostridium thermocellum)).